The following is a 355-amino-acid chain: Protein RecA (355 aa).

Residue 69–76 (GPESSGKT) participates in ATP binding. Residues 329-355 (AYGLPDREETKREETAQIPDTEKTKDV) form a disordered region.

This sequence belongs to the RecA family.

It is found in the cytoplasm. Can catalyze the hydrolysis of ATP in the presence of single-stranded DNA, the ATP-dependent uptake of single-stranded DNA by duplex DNA, and the ATP-dependent hybridization of homologous single-stranded DNAs. It interacts with LexA causing its activation and leading to its autocatalytic cleavage. This is Protein RecA from Desulfotalea psychrophila (strain LSv54 / DSM 12343).